The primary structure comprises 243 residues: Protein canopy homolog 3 (243 aa).

The N-terminal stretch at 1 to 15 (MWFLFLLLPLWAGCA) is a signal peptide. The Saposin B-type domain occupies 27 to 236 (SKCEVCKYVA…KEEKKQMDQP (210 aa)). 3 disulfides stabilise this stretch: C29-C188, C32-C176, and C86-C148. Residues 136–160 (ETSAEVADMKKQCDVMMENYEEVIE) are a coiled coil. Residues 186-243 (QSCLSEQGDSRKGDTGPSTGTKKQKKQGEKKNKSKKQNSGSKEEKKQMDQPMAAKEEL) are disordered. The segment covering 226 to 243 (SKEEKKQMDQPMAAKEEL) has biased composition (basic and acidic residues).

The protein belongs to the canopy family.

It localises to the endoplasmic reticulum. Toll-like receptor (TLR)-specific co-chaperone for HSP90B1. Required for proper TLR folding and hence controls TLR exit from the endoplasmic reticulum. Consequently, required for immune responses. The sequence is that of Protein canopy homolog 3 (cnpy3) from Xenopus laevis (African clawed frog).